The primary structure comprises 2352 residues: Ectopic P granules protein 5 (2352 aa).

2 disordered regions span residues 1-112 (MAEL…IFPR) and 1315-1335 (KNRESPLPPEIGSPRSRSSAK). Basic and acidic residues predominate over residues 66 to 81 (DSLKREEASEPLKDVR).

It belongs to the EPG5 family. As to expression, expressed in pharyngeal and body wall muscles and intestine cells.

It localises to the cytoplasm. It is found in the cytoplasmic vesicle. The protein localises to the phagosome membrane. In terms of biological role, involved in the maturation of autophagosomes into autolysosomes during starvation-induced autotrophy. Specifically, involved in the clearance of apoptotic cells by promoting the delivery of engulfed apoptotic cells to the lysosome. The protein is Ectopic P granules protein 5 of Caenorhabditis elegans.